The sequence spans 235 residues: Voltage-gated hydrogen channel 1 (235 aa).

At 1 to 62 (MSRYLKHFTV…VMKKLFSSRR (62 aa)) the chain is on the cytoplasmic side. The helical transmembrane segment at 63–83 (FQIVIVFLVIVDALLVLGELL) threads the bilayer. Over 84–100 (MDLKIIHPDKYHIAPKV) the chain is Extracellular. A helical transmembrane segment spans residues 101–123 (FHYLSLSILTIFLVEVGFKIFVY). At 124-131 (GREFFHHK) the chain is on the cytoplasmic side. Residues 132 to 152 (FEVLDSIVVVVSFILDLVLLF) form a helical membrane-spanning segment. The Extracellular segment spans residues 153–159 (REHEFEA). A helical transmembrane segment spans residues 160-180 (VGLLILLRLWRVARIINGIIL). Topologically, residues 181-235 (SVKTRSEQQVSKLKQVNLKLATKVEQLQHSCVEKEQEIERLTRMLKQHGLLSEQT) are cytoplasmic. Positions 187–228 (EQQVSKLKQVNLKLATKVEQLQHSCVEKEQEIERLTRMLKQH) form a coiled coil.

This sequence belongs to the hydrogen channel family. In terms of assembly, homodimer.

The protein localises to the membrane. It localises to the cell membrane. Mediates the voltage-dependent proton permeability of excitable membranes. Forms a proton-selective channel through which protons may pass in accordance with their electrochemical gradient. The chain is Voltage-gated hydrogen channel 1 (HVCN1) from Gallus gallus (Chicken).